The primary structure comprises 393 residues: Prokineticin receptor 1 (393 aa).

Over 1–62 the chain is Extracellular; it reads METTVGALGE…TNSRTFFAAK (62 aa). Asparagine 11 carries N-linked (GlcNAc...) asparagine glycosylation. The chain crosses the membrane as a helical span at residues 63 to 83; the sequence is IVIGMALVGIMLVCGIGNFIF. The Cytoplasmic segment spans residues 84–98; it reads ITALARYKKLRNLTN. The chain crosses the membrane as a helical span at residues 99 to 119; the sequence is LLIANLAISDFLVAIVCCPFE. Topologically, residues 120–146 are extracellular; the sequence is MDYYVVRQLSWEHGHVLCASVNYLRTV. The cysteines at positions 137 and 217 are disulfide-linked. The chain crosses the membrane as a helical span at residues 147–167; that stretch reads SLYVSTNALLAIAIDRYLAIV. The Cytoplasmic segment spans residues 168-179; that stretch reads HPLRPRMKCQTA. A helical membrane pass occupies residues 180–200; that stretch reads AGLIFLVWSVSILIAIPAAYF. Topologically, residues 201–232 are extracellular; the sequence is TTETVLVIVERQEKIFCGQIWPVDQQFYYRSY. A helical membrane pass occupies residues 233–253; sequence FLLVFGLEFVGPVVAMTLCYA. Over 254-282 the chain is Cytoplasmic; the sequence is RVSRELWFKAVPGFQTEQIRRRLRCRRRT. A helical transmembrane segment spans residues 283-303; sequence VLGLVCVLSAYVLCWAPFYGF. At 304–322 the chain is on the extracellular side; that stretch reads TIVRDFFPSVFVKEKHYLT. A helical transmembrane segment spans residues 323 to 343; sequence AFYVVECIAMSNSMINTLCFV. The Cytoplasmic portion of the chain corresponds to 344-393; it reads TVRNNTSKYLKRILRLQWRASPSGSKASADLDLRTTGIPATEEVDCIRLK.

This sequence belongs to the G-protein coupled receptor 1 family. Expressed at high levels in the heart, skeletal muscle and pancreas. Expressed at lower levels in the brain, lung, liver and kidney.

It is found in the cell membrane. Its function is as follows. Receptor for prokineticin 1. Exclusively coupled to the G(q) subclass of heteromeric G proteins. Activation leads to mobilization of calcium, stimulation of phosphoinositide turnover and activation of p44/p42 mitogen-activated protein kinase. May play a role during early pregnancy. This Mus musculus (Mouse) protein is Prokineticin receptor 1 (Prokr1).